We begin with the raw amino-acid sequence, 191 residues long: dCTP deaminase, dUMP-forming (191 aa).

Residues 101–106 (KSSLGR), Asp119, 127–129 (TLE), Gln148, Tyr162, and Gln174 contribute to the dCTP site. Glu129 serves as the catalytic Proton donor/acceptor. The interval 169–191 (SRYQGQRGPTASRSFQNFHRTQV) is disordered. Residues 171 to 191 (YQGQRGPTASRSFQNFHRTQV) are compositionally biased toward polar residues.

The protein belongs to the dCTP deaminase family. In terms of assembly, homotrimer.

It catalyses the reaction dCTP + 2 H2O = dUMP + NH4(+) + diphosphate. Its pathway is pyrimidine metabolism; dUMP biosynthesis; dUMP from dCTP: step 1/1. In terms of biological role, bifunctional enzyme that catalyzes both the deamination of dCTP to dUTP and the hydrolysis of dUTP to dUMP without releasing the toxic dUTP intermediate. This Streptomyces griseus subsp. griseus (strain JCM 4626 / CBS 651.72 / NBRC 13350 / KCC S-0626 / ISP 5235) protein is dCTP deaminase, dUMP-forming.